Here is a 468-residue protein sequence, read N- to C-terminus: Aldehyde dehydrogenase family 3 member B1 (468 aa).

An N-acetylmethionine modification is found at Met-1. 188–193 lines the NAD(+) pocket; that stretch reads GNTYVG. Residues Glu-210 and Cys-244 contribute to the active site. 2 S-palmitoyl cysteine lipidation sites follow: Cys-462 and Cys-463. Cys-465 bears the Cysteine methyl ester mark. A lipid anchor (S-geranylgeranyl cysteine) is attached at Cys-465. Positions 466-468 are cleaved as a propeptide — removed in mature form; that stretch reads TLL.

This sequence belongs to the aldehyde dehydrogenase family. Post-translationally, dually lipidated in the C-terminus; prenylation occurs prior to, and is a prerequisite for palmitoylation. It is also required for activity towards long-chain substrates.

The protein localises to the cell membrane. It carries out the reaction an aldehyde + NAD(+) + H2O = a carboxylate + NADH + 2 H(+). The enzyme catalyses a long-chain fatty aldehyde + NAD(+) + H2O = a long-chain fatty acid + NADH + 2 H(+). It catalyses the reaction a medium-chain fatty aldehyde + NAD(+) + H2O = a medium-chain fatty acid + NADH + 2 H(+). The catalysed reaction is octanal + NAD(+) + H2O = octanoate + NADH + 2 H(+). It carries out the reaction nonanal + NAD(+) + H2O = nonanoate + NADH + 2 H(+). The enzyme catalyses hexadecanoate + NADH + 2 H(+) = hexadecanal + NAD(+) + H2O. It catalyses the reaction (2E)-octenal + NAD(+) + H2O = (2E)-octenoate + NADH + 2 H(+). The catalysed reaction is (E)-non-2-enal + NAD(+) + H2O = (E)-non-2-enoate + NADH + 2 H(+). It carries out the reaction (E)-4-hydroxynon-2-enal + NAD(+) + H2O = (E)-4-hydroxynon-2-enoate + NADH + 2 H(+). The enzyme catalyses (2E)-hexadecenal + NAD(+) + H2O = (E)-hexadec-2-enoate + NADH + 2 H(+). It catalyses the reaction benzaldehyde + NAD(+) + H2O = benzoate + NADH + 2 H(+). The catalysed reaction is an aldehyde + NADP(+) + H2O = a carboxylate + NADPH + 2 H(+). It carries out the reaction a medium-chain fatty aldehyde + NADP(+) + H2O = a medium-chain fatty acid + NADPH + 2 H(+). The enzyme catalyses hexanal + NADP(+) + H2O = hexanoate + NADPH + 2 H(+). It catalyses the reaction octanal + NADP(+) + H2O = octanoate + NADPH + 2 H(+). The catalysed reaction is nonanal + NADP(+) + H2O = nonanoate + NADPH + 2 H(+). It carries out the reaction (2E)-octenal + NADP(+) + H2O = (2E)-octenoate + NADPH + 2 H(+). The enzyme catalyses (E)-non-2-enal + NADP(+) + H2O = (E)-non-2-enoate + NADPH + 2 H(+). It catalyses the reaction (E)-4-hydroxynon-2-enal + NADP(+) + H2O = (E)-4-hydroxynon-2-enoate + NADPH + 2 H(+). The catalysed reaction is benzaldehyde + NADP(+) + H2O = benzoate + NADPH + 2 H(+). It participates in alcohol metabolism; ethanol degradation; acetate from ethanol: step 2/2. Functionally, oxidizes medium and long chain saturated and unsaturated fatty aldehydes generated in the plasma membrane into non-toxic fatty acids. May have a protective role against the cytotoxicity induced by lipid peroxidation. Short-chain fatty aldehydes are not good substrates. Can use both NADP(+) and NAD(+) as electron acceptor in vitro, however in vivo preference will depend on their tissue levels. Low activity towards acetaldehyde and 3,4-dihydroxyphenylacetaldehyde. Able to metabolize aromatic aldehydes such as benzaldehyde to their acid form. This Rattus norvegicus (Rat) protein is Aldehyde dehydrogenase family 3 member B1 (Aldh3b1).